A 204-amino-acid polypeptide reads, in one-letter code: Dual-action ribosomal maturation protein DarP (204 aa).

2 disordered regions span residues 1-31 (MPPMTRKTRIQPIEPVAEEDDNGYDRPSKSQ) and 182-204 (GGASDSDDEAADDAGDDHDDDEA). Over residues 186–204 (DSDDEAADDAGDDHDDDEA) the composition is skewed to acidic residues.

Belongs to the DarP family.

It is found in the cytoplasm. Its function is as follows. Member of a network of 50S ribosomal subunit biogenesis factors which assembles along the 30S-50S interface, preventing incorrect 23S rRNA structures from forming. Promotes peptidyl transferase center (PTC) maturation. The chain is Dual-action ribosomal maturation protein DarP from Burkholderia orbicola (strain MC0-3).